We begin with the raw amino-acid sequence, 336 residues long: tRNA(Ile)-lysidine synthase (336 aa).

40–45 (SGGQDS) lines the ATP pocket.

This sequence belongs to the tRNA(Ile)-lysidine synthase family.

The protein resides in the cytoplasm. The enzyme catalyses cytidine(34) in tRNA(Ile2) + L-lysine + ATP = lysidine(34) in tRNA(Ile2) + AMP + diphosphate + H(+). Its function is as follows. Ligates lysine onto the cytidine present at position 34 of the AUA codon-specific tRNA(Ile) that contains the anticodon CAU, in an ATP-dependent manner. Cytidine is converted to lysidine, thus changing the amino acid specificity of the tRNA from methionine to isoleucine. The chain is tRNA(Ile)-lysidine synthase from Prochlorococcus marinus subsp. pastoris (strain CCMP1986 / NIES-2087 / MED4).